The following is a 204-amino-acid chain: MSIHPKLNNKQRRIGLTGGIASGKSTIAKYIKEYIDIPILDADQYSKDLIKPKSNCYKKVVAYFGPQIVDQHSSENEINRALLKKIIFENSIHRKWIQNLLHPLIKEKMIEKCNQFDKNKILLLVIPLLFEAKFGDICTEIWLVKCPKEVQKKRLMKRNIISENEAQKIINLQLNFEDKSKFADVILDNSDNKQLWKNTIKKLV.

Positions 13–204 (RIGLTGGIAS…LWKNTIKKLV (192 aa)) constitute a DPCK domain. 21 to 26 (ASGKST) contacts ATP.

This sequence belongs to the CoaE family.

It localises to the cytoplasm. It catalyses the reaction 3'-dephospho-CoA + ATP = ADP + CoA + H(+). It participates in cofactor biosynthesis; coenzyme A biosynthesis; CoA from (R)-pantothenate: step 5/5. Functionally, catalyzes the phosphorylation of the 3'-hydroxyl group of dephosphocoenzyme A to form coenzyme A. This is Dephospho-CoA kinase from Prochlorococcus marinus subsp. pastoris (strain CCMP1986 / NIES-2087 / MED4).